A 611-amino-acid chain; its full sequence is DNA mismatch repair protein MutL (611 aa).

The protein belongs to the DNA mismatch repair MutL/HexB family.

In terms of biological role, this protein is involved in the repair of mismatches in DNA. It is required for dam-dependent methyl-directed DNA mismatch repair. May act as a 'molecular matchmaker', a protein that promotes the formation of a stable complex between two or more DNA-binding proteins in an ATP-dependent manner without itself being part of a final effector complex. The chain is DNA mismatch repair protein MutL from Bartonella bacilliformis (strain ATCC 35685 / KC583 / Herrer 020/F12,63).